Here is a 312-residue protein sequence, read N- to C-terminus: Ribosomal protein L11 methyltransferase (312 aa).

S-adenosyl-L-methionine is bound by residues Thr-163, Gly-184, Asp-206, and Asn-248.

The protein belongs to the methyltransferase superfamily. PrmA family.

It is found in the cytoplasm. The enzyme catalyses L-lysyl-[protein] + 3 S-adenosyl-L-methionine = N(6),N(6),N(6)-trimethyl-L-lysyl-[protein] + 3 S-adenosyl-L-homocysteine + 3 H(+). In terms of biological role, methylates ribosomal protein L11. This is Ribosomal protein L11 methyltransferase from Clostridium kluyveri (strain NBRC 12016).